The chain runs to 460 residues: Elongation factor 1-alpha 3 (460 aa).

Residues 6–243 (KTHINIVVIG…DCIIPPQRPT (238 aa)) enclose the tr-type G domain. A G1 region spans residues 15-22 (GHVDSGKS). Residues 71–75 (GITID) form a G2 region. Residues 92-95 (DAPG) form a G3 region. The interval 154–157 (NKMD) is G4. A G5 region spans residues 195 to 197 (SGF). 5-glutamyl glycerylphosphorylethanolamine is present on residues Glu-302 and Glu-375.

This sequence belongs to the TRAFAC class translation factor GTPase superfamily. Classic translation factor GTPase family. EF-Tu/EF-1A subfamily.

The protein resides in the cytoplasm. Functionally, this protein promotes the GTP-dependent binding of aminoacyl-tRNA to the A-site of ribosomes during protein biosynthesis. This is Elongation factor 1-alpha 3 (eft-3) from Oscheius tipulae.